The sequence spans 160 residues: 6,7-dimethyl-8-ribityllumazine synthase (160 aa).

Residues tryptophan 27, 59–61, and 81–83 each bind 5-amino-6-(D-ribitylamino)uracil; these read AIE and VVI. 86 to 87 contacts (2S)-2-hydroxy-3-oxobutyl phosphate; sequence QT. The Proton donor role is filled by histidine 89. Asparagine 114 lines the 5-amino-6-(D-ribitylamino)uracil pocket. Position 128 (arginine 128) interacts with (2S)-2-hydroxy-3-oxobutyl phosphate.

It belongs to the DMRL synthase family. In terms of assembly, homopentamer.

It catalyses the reaction (2S)-2-hydroxy-3-oxobutyl phosphate + 5-amino-6-(D-ribitylamino)uracil = 6,7-dimethyl-8-(1-D-ribityl)lumazine + phosphate + 2 H2O + H(+). The protein operates within cofactor biosynthesis; riboflavin biosynthesis; riboflavin from 2-hydroxy-3-oxobutyl phosphate and 5-amino-6-(D-ribitylamino)uracil: step 1/2. Its function is as follows. Catalyzes the formation of 6,7-dimethyl-8-ribityllumazine by condensation of 5-amino-6-(D-ribitylamino)uracil with 3,4-dihydroxy-2-butanone 4-phosphate. This is the penultimate step in the biosynthesis of riboflavin. The protein is 6,7-dimethyl-8-ribityllumazine synthase of Mycobacterium avium (strain 104).